The following is a 235-amino-acid chain: Uridylate kinase (235 aa).

9–12 contacts ATP; that stretch reads KLSG. The involved in allosteric activation by GTP stretch occupies residues 17–22; it reads GNQGYG. A UMP-binding site is contributed by G51. The ATP site is built by G52 and R56. UMP contacts are provided by residues D71 and 132–139; that span reads CGNPFFTT. ATP is bound by residues T159, Y165, and D168.

The protein belongs to the UMP kinase family. In terms of assembly, homohexamer.

Its subcellular location is the cytoplasm. The enzyme catalyses UMP + ATP = UDP + ADP. Its pathway is pyrimidine metabolism; CTP biosynthesis via de novo pathway; UDP from UMP (UMPK route): step 1/1. Its activity is regulated as follows. Allosterically activated by GTP. Inhibited by UTP. Catalyzes the reversible phosphorylation of UMP to UDP. The sequence is that of Uridylate kinase from Synechococcus sp. (strain CC9311).